The sequence spans 288 residues: Polyamine aminopropyltransferase (288 aa).

Residues 9 to 238 enclose the PABS domain; the sequence is ETLHDQFGQY…GIMTFAWATD (230 aa). Position 33 (Gln-33) interacts with S-methyl-5'-thioadenosine. Positions 64 and 88 each coordinate spermidine. Residues Glu-108 and 140-141 each bind S-methyl-5'-thioadenosine; that span reads DG. Residue Asp-158 is the Proton acceptor of the active site. 158 to 161 is a binding site for spermidine; it reads DCTD. Pro-165 contributes to the S-methyl-5'-thioadenosine binding site.

This sequence belongs to the spermidine/spermine synthase family. In terms of assembly, homodimer or homotetramer.

Its subcellular location is the cytoplasm. The enzyme catalyses S-adenosyl 3-(methylsulfanyl)propylamine + putrescine = S-methyl-5'-thioadenosine + spermidine + H(+). Its pathway is amine and polyamine biosynthesis; spermidine biosynthesis; spermidine from putrescine: step 1/1. Functionally, catalyzes the irreversible transfer of a propylamine group from the amino donor S-adenosylmethioninamine (decarboxy-AdoMet) to putrescine (1,4-diaminobutane) to yield spermidine. The protein is Polyamine aminopropyltransferase of Shigella flexneri serotype 5b (strain 8401).